The sequence spans 227 residues: ATP-dependent dethiobiotin synthetase BioD (227 aa).

Residue 13 to 18 (DVGKTV) participates in ATP binding. Residue Thr17 coordinates Mg(2+). Residue Lys38 is part of the active site. Residues Asp55, 116–119 (EGAG), and 176–177 (NR) contribute to the ATP site. 2 residues coordinate Mg(2+): Asp55 and Glu116.

The protein belongs to the dethiobiotin synthetase family. As to quaternary structure, homodimer. Requires Mg(2+) as cofactor.

The protein localises to the cytoplasm. The enzyme catalyses (7R,8S)-7,8-diammoniononanoate + CO2 + ATP = (4R,5S)-dethiobiotin + ADP + phosphate + 3 H(+). The protein operates within cofactor biosynthesis; biotin biosynthesis; biotin from 7,8-diaminononanoate: step 1/2. In terms of biological role, catalyzes a mechanistically unusual reaction, the ATP-dependent insertion of CO2 between the N7 and N8 nitrogen atoms of 7,8-diaminopelargonic acid (DAPA, also called 7,8-diammoniononanoate) to form a ureido ring. In Aliivibrio salmonicida (strain LFI1238) (Vibrio salmonicida (strain LFI1238)), this protein is ATP-dependent dethiobiotin synthetase BioD.